A 158-amino-acid polypeptide reads, in one-letter code: MTKFTILLISLLFCIAHTCSASKWQHQQDSCRKQLQGVNLTPCEKHIMEKIQGRGDDDDDDDDDNHILRTMRGRINYIRRNEGKDEDEEEEGHMQKCCTEMSELRSPKCQCKALQKIMENQSEELEEKQKKKMEKELINLATMCRFGPMIQCDLSSDD.

Positions 1 to 21 are cleaved as a signal peptide; it reads MTKFTILLISLLFCIAHTCSA. A Cell attachment site motif is present at residues 54–56; sequence RGD. A propeptide spanning residues 65 to 81 is cleaved from the precursor; it reads NHILRTMRGRINYIRRN.

Belongs to the 2S seed storage albumins family. As to quaternary structure, the protein consists of two chains linked by 2 disulfide bonds. In terms of tissue distribution, expressed in cotyledons. Maximal expression in parenchyma cells undergoing DNA endoreduplication and cell expansion but not in actively dividing cells of the cotyledon.

Functionally, this is a 2S seed storage protein. Binds to mammalian chromatin, preventing the normal formation of the kinetochore complex in the centromere and leading to the disruption of mitosis. This Glycine max (Soybean) protein is 2S seed storage albumin protein.